We begin with the raw amino-acid sequence, 170 residues long: Ribosome maturation factor RimM (170 aa).

One can recognise a PRC barrel domain in the interval 97-170; sequence HPDEYYWVDL…RIVVDWDPEF (74 aa).

This sequence belongs to the RimM family. Binds ribosomal protein uS19.

It is found in the cytoplasm. An accessory protein needed during the final step in the assembly of 30S ribosomal subunit, possibly for assembly of the head region. Essential for efficient processing of 16S rRNA. May be needed both before and after RbfA during the maturation of 16S rRNA. It has affinity for free ribosomal 30S subunits but not for 70S ribosomes. This chain is Ribosome maturation factor RimM, found in Xylella fastidiosa (strain M23).